The chain runs to 826 residues: Receptor-like protein 18 (826 aa).

At 1–780 (MRCQVWNVIE…EEDEEEVISW (780 aa)) the chain is on the extracellular side. 7 LRR repeats span residues 5–31 (VWNV…IFSL), 32–54 (QNLR…SLGN), 55–79 (FSSL…LGNL), 81–103 (HLTS…LGNL), 104–127 (SHLT…LGNL), 128–150 (SHLT…SFEN), and 151–177 (LSHL…SFNQ). N-linked (GlcNAc...) asparagine glycosylation is found at N12 and N54. 3 N-linked (GlcNAc...) asparagine glycosylation sites follow: N102, N126, and N150. One copy of the LRR 8; degenerate repeat lies at 178-198 (LVSLAVEENEFTGNFLLILLN). N-linked (GlcNAc...) asparagine glycosylation is found at N198, N201, and N219. 20 LRR repeats span residues 199 to 223 (LTNL…MSSL), 225 to 247 (NLVL…LLNI), 248 to 271 (PSLS…NISS), 273 to 294 (LSDL…ISKL), 296 to 318 (NLYT…IFSD), 319 to 343 (LKLL…TFLS), 345 to 368 (FKSL…SVSN), 382 to 405 (PLLL…LRTQ), 406 to 429 (QTME…LWTL), 430 to 452 (PTLD…MVPS), 455 to 478 (QPSM…FICA), 479 to 500 (FTLQ…ENIS), 501 to 524 (ESLK…LVRI), 525 to 550 (SSLE…SLEE), 552 to 570 (QVLV…QTRF), 571 to 594 (PNLR…FFVN), 637 to 661 (LKIF…IGLL), 662 to 685 (KELH…MGKL), 686 to 709 (RELE…LGDL), and 711 to 734 (YLAY…QFLT). N268 carries an N-linked (GlcNAc...) asparagine glycan. N312, N331, N362, and N389 each carry an N-linked (GlcNAc...) asparagine glycan. N-linked (GlcNAc...) asparagine glycans are attached at residues N436, N439, N467, and N498. N-linked (GlcNAc...) asparagine glycosylation occurs at N538. Residues N584 and N594 are each glycosylated (N-linked (GlcNAc...) asparagine). A glycan (N-linked (GlcNAc...) asparagine) is linked at N668. N716 and N736 each carry an N-linked (GlcNAc...) asparagine glycan. A helical membrane pass occupies residues 781–801 (IAATIGFIPGIAFGLMMGYIL). Residues 802–826 (VCYKPEWFMNVFGKNKSRSTSSTTR) lie on the Cytoplasmic side of the membrane.

It belongs to the RLP family.

It is found in the cell membrane. This Arabidopsis thaliana (Mouse-ear cress) protein is Receptor-like protein 18.